The chain runs to 239 residues: Fatty acid metabolism regulator protein (239 aa).

The 69-residue stretch at 6-74 folds into the HTH gntR-type domain; sequence QSPAGFAEEY…HGKPTKVNNF (69 aa). A DNA-binding region (H-T-H motif) is located at residues 34–53; it reads ERELSELIGVTRTTLREVLQ.

Homodimer.

The protein localises to the cytoplasm. Functionally, multifunctional regulator of fatty acid metabolism. Represses transcription of at least eight genes required for fatty acid transport and beta-oxidation including fadA, fadB, fadD, fadL and fadE. Activates transcription of at least three genes required for unsaturated fatty acid biosynthesis: fabA, fabB and iclR, the gene encoding the transcriptional regulator of the aceBAK operon encoding the glyoxylate shunt enzymes. Binding of FadR is specifically inhibited by long chain fatty acyl-CoA compounds. The sequence is that of Fatty acid metabolism regulator protein from Salmonella typhimurium (strain LT2 / SGSC1412 / ATCC 700720).